Consider the following 370-residue polypeptide: Transcription factor E2F2 (370 aa).

The tract at residues 1–73 is disordered; it reads MYKRKTASIV…QSQSQPGQQR (73 aa). Residues 15 to 26 show a composition bias toward low complexity; sequence SAAGTTSSAMMM. Positions 31 to 49 are enriched in polar residues; it reads AETSVRSQSYESTPVSMDT. Over residues 59–73 the composition is skewed to low complexity; the sequence is SPSNSQSQSQPGQQR. A DNA-binding region spans residues 72–137; it reads QRSVGSLVLL…GRHCSLVRWR (66 aa). A dimerization region spans residues 137–226; it reads RGGGFNNAKD…VDIKRNHYEL (90 aa).

It belongs to the E2F/DP family. Forms a heterodimer with Dp. Interacts with Rbf/Rbf1 and Rbf2. Component of the DREAM complex, which is at least composed of Myb, Caf1-55, mip40, mip120, mip130, E2f2, Dp, Rbf, Rbf2, lin-52, HDAC1/Rpd3 and l(3)mbt. Ubiquitously expressed in eye disk.

The protein resides in the nucleus. Functionally, transcriptional repressor that binds to E2f sites and represses E2f-regulated target genes. Binding to E2f sites requires transcription factor Dp. Acts synergistically with Rbf2 to antagonize E2f1-mediated transcriptional activation. Component of the DREAM complex, a multiprotein complex that can both act as a transcription activator or repressor depending on the context. The DREAM complex is required for recruiting E2f2 at differentiation-specific promoters and for stabilizing E2f2-Rbf complexes during S phase. During development, the complex represses transcription of developmentally controlled E2f target genes. During oogenesis, plays a role in restricting DNA synthesis to sites of chorion gene amplification in late stage ovarian follicle cells. Plays an inhibitory role in ionizing radiation (IR)-induced p53-independent apoptosis. May be involved in cell cycle exit by temporarily limiting CycE-dependent activation of E2f-regulated transcription. In Drosophila melanogaster (Fruit fly), this protein is Transcription factor E2F2 (E2f2).